We begin with the raw amino-acid sequence, 613 residues long: MSKAKEGDYGSIKKVSGPVVVADNMGGSAMYELVRVGTGELIGEIIRLEGDTATIQVYEETSGLTVGDGVLRTKQPLSVDLGPGILGNIFDGIQRPLKAIADVSGDVFIPRGVNVPSLDQTKQWEFRPSAFKVGDRVTGGDIIGIVPENSLLDHKVMLLPQAKGTVTYIAAPGNYTINEKIIEVEFQGAKYEYSMKQSWPVRSPRPVVEKLLADTPLLTGQRVLDSLFPGVRGGTCAIPGAFGCGKTVISQALSKYSNSDGIVYVGCGERGNEMAEVLMDFPQLTMTMPDGREESIMKRTTLVANTSNMPVAAREASIYTGITLSEYFRDMGYNFAMMADSTSRWAEALREISGRLAEMPADSGYPAYLGARLASFYERSGRVACIGSPEREGSVTIVGAVSPPGGDFSDPVTSATLGIVQVFWGLDKKLAQRKHFPSVNWLISYSKYLNALEPFYEKFDSDFVTLRQVAREVLQKEDELNEIVQLVGKDALAESDKIILETARFLKEDYLQQNSFTKYDKYCPFYKSVGMMRNIVTFHRLATQAIERTAAGNVDGQKITFNIIKAKLGDLLYKVSSQKFEDPSDGEGVVTAHLNELNEELKEKFRALEDEYR.

240–247 contacts ATP; it reads GAFGCGKT.

Belongs to the ATPase alpha/beta chains family. In terms of assembly, V-ATPase is a heteromultimeric enzyme composed of a peripheral catalytic V1 complex (main components: subunits A, B, C, D, E, and F) attached to an integral membrane V0 proton pore complex (main component: the proteolipid protein).

It carries out the reaction ATP + H2O + 4 H(+)(in) = ADP + phosphate + 5 H(+)(out). In terms of biological role, catalytic subunit of the peripheral V1 complex of vacuolar ATPase. V-ATPase vacuolar ATPase is responsible for acidifying a variety of intracellular compartments in eukaryotic cells. This Acetabularia acetabulum (Mermaid's wine glass) protein is V-type proton ATPase catalytic subunit A isoform 1.